The primary structure comprises 348 residues: Putative serine/threonine-protein phosphatase C26H8.05c (348 aa).

Residues Asp-53, His-55, Asp-81, and Asn-113 each coordinate Mn(2+). The Proton donor role is filled by His-114. His-163 and His-237 together coordinate Mn(2+). A disordered region spans residues 259–282; the sequence is TNEEDSELDSDSASPVDDSPAPGD. The segment covering 269–280 has biased composition (low complexity); that stretch reads DSASPVDDSPAP. The residue at position 272 (Ser-272) is a Phosphoserine. At Leu-348 the chain carries Leucine methyl ester.

This sequence belongs to the PPP phosphatase family. PP-1 subfamily. Mn(2+) is required as a cofactor.

It localises to the cytoplasm. It is found in the nucleus. The enzyme catalyses O-phospho-L-seryl-[protein] + H2O = L-seryl-[protein] + phosphate. It catalyses the reaction O-phospho-L-threonyl-[protein] + H2O = L-threonyl-[protein] + phosphate. In Schizosaccharomyces pombe (strain 972 / ATCC 24843) (Fission yeast), this protein is Putative serine/threonine-protein phosphatase C26H8.05c.